Here is a 143-residue protein sequence, read N- to C-terminus: MAIERTFSIIKPDAVAKNHIGAIYNRFETAGLKIVAAKMLHLTKEQAEGFYAEHSERGFFGALVAFMTSGPIMVQVLEGENAVLAHREILGATNPAQAAPGTIRADFAESIDENAAHGSDAVESAAREIAYFFSAEELCPRTR.

Residues lysine 11, phenylalanine 59, arginine 87, threonine 93, arginine 104, and asparagine 114 each coordinate ATP. Histidine 117 acts as the Pros-phosphohistidine intermediate in catalysis.

Belongs to the NDK family. Homotetramer. Requires Mg(2+) as cofactor.

The protein localises to the cytoplasm. The enzyme catalyses a 2'-deoxyribonucleoside 5'-diphosphate + ATP = a 2'-deoxyribonucleoside 5'-triphosphate + ADP. It catalyses the reaction a ribonucleoside 5'-diphosphate + ATP = a ribonucleoside 5'-triphosphate + ADP. Functionally, major role in the synthesis of nucleoside triphosphates other than ATP. The ATP gamma phosphate is transferred to the NDP beta phosphate via a ping-pong mechanism, using a phosphorylated active-site intermediate. This is Nucleoside diphosphate kinase from Shewanella sp. (strain W3-18-1).